Consider the following 201-residue polypeptide: Transmembrane 4 L6 family member 18 (201 aa).

Residues Met1 to Cys9 are Cytoplasmic-facing. A helical transmembrane segment spans residues Leu10–Phe30. The Extracellular segment spans residues Pro31 to Tyr49. A helical transmembrane segment spans residues Phe50–Leu70. The Cytoplasmic segment spans residues Glu71 to Ser93. The helical transmembrane segment at Ile94 to Gly114 threads the bilayer. Topologically, residues Leu115 to Trp157 are extracellular. A helical membrane pass occupies residues Asn158 to Ile178. Residues Arg179–Ile201 lie on the Cytoplasmic side of the membrane.

The protein belongs to the L6 tetraspanin family.

Its subcellular location is the membrane. The chain is Transmembrane 4 L6 family member 18 (TM4SF18) from Homo sapiens (Human).